The following is a 524-amino-acid chain: 2-isopropylmalate synthase (524 aa).

The Pyruvate carboxyltransferase domain occupies 15 to 275 (VVVFDTTMRD…PYGTSVDPVH (261 aa)). Residues aspartate 24, histidine 212, histidine 214, and asparagine 248 each coordinate Mn(2+). The interval 401–524 (RVSRLRVVAG…RPEAAIASGF (124 aa)) is regulatory domain.

This sequence belongs to the alpha-IPM synthase/homocitrate synthase family. LeuA type 1 subfamily. As to quaternary structure, homodimer. Mn(2+) is required as a cofactor.

The protein resides in the cytoplasm. It carries out the reaction 3-methyl-2-oxobutanoate + acetyl-CoA + H2O = (2S)-2-isopropylmalate + CoA + H(+). Its pathway is amino-acid biosynthesis; L-leucine biosynthesis; L-leucine from 3-methyl-2-oxobutanoate: step 1/4. Functionally, catalyzes the condensation of the acetyl group of acetyl-CoA with 3-methyl-2-oxobutanoate (2-ketoisovalerate) to form 3-carboxy-3-hydroxy-4-methylpentanoate (2-isopropylmalate). The protein is 2-isopropylmalate synthase of Caulobacter vibrioides (strain ATCC 19089 / CIP 103742 / CB 15) (Caulobacter crescentus).